The following is a 299-amino-acid chain: Farnesyl diphosphate synthase (299 aa).

Positions 45, 48, and 77 each coordinate isopentenyl diphosphate. Mg(2+)-binding residues include aspartate 84 and aspartate 90. (2E)-geranyl diphosphate is bound at residue arginine 95. Arginine 96 contributes to the isopentenyl diphosphate binding site. Residues lysine 181, threonine 182, glutamine 220, and lysine 237 each coordinate (2E)-geranyl diphosphate.

Belongs to the FPP/GGPP synthase family. Requires Mg(2+) as cofactor.

It localises to the cytoplasm. It catalyses the reaction isopentenyl diphosphate + (2E)-geranyl diphosphate = (2E,6E)-farnesyl diphosphate + diphosphate. This chain is Farnesyl diphosphate synthase (ispA), found in Escherichia coli (strain K12).